The following is a 214-amino-acid chain: Adenylate kinase (214 aa).

Position 10–15 (Gly-10–Thr-15) interacts with ATP. Residues Ser-30–Val-59 are NMP. Residues Thr-31, Arg-36, Gln-57–Val-59, Gly-85–Arg-88, and Gln-92 each bind AMP. The LID stretch occupies residues Gly-122–Asp-159. ATP contacts are provided by residues Arg-123 and Thr-132–Tyr-133. AMP-binding residues include Arg-156 and Arg-167. Lys-200 provides a ligand contact to ATP.

This sequence belongs to the adenylate kinase family. As to quaternary structure, monomer.

The protein resides in the cytoplasm. It carries out the reaction AMP + ATP = 2 ADP. Its pathway is purine metabolism; AMP biosynthesis via salvage pathway; AMP from ADP: step 1/1. Catalyzes the reversible transfer of the terminal phosphate group between ATP and AMP. Plays an important role in cellular energy homeostasis and in adenine nucleotide metabolism. This Vibrio vulnificus (strain CMCP6) protein is Adenylate kinase.